Here is a 177-residue protein sequence, read N- to C-terminus: B-phycoerythrin beta chain (177 aa).

The phycourobilin site is built by Cys50 and Cys61. At Asn72 the chain carries N4-methylasparagine. (2R,3E)-phycoerythrobilin-binding residues include Cys82 and Cys158.

This sequence belongs to the phycobiliprotein family. Heteromer of 6 alpha, 6 beta and one gamma chain. Contains two covalently linked phycoerythrobilin chromophores and one covalently linked phycourobilin chromophore.

It localises to the plastid. Its subcellular location is the chloroplast thylakoid membrane. Its function is as follows. Light-harvesting photosynthetic bile pigment-protein from the phycobiliprotein complex. The sequence is that of B-phycoerythrin beta chain (cpeB) from Porphyridium purpureum (Red alga).